The primary structure comprises 189 residues: Interferon alpha-1 (189 aa).

Residues 1–23 (MARLCAFLMVLAVLSYWPTCSLG) form the signal peptide. 2 disulfides stabilise this stretch: cysteine 24/cysteine 122 and cysteine 52/cysteine 162. The N-linked (GlcNAc...) asparagine glycan is linked to asparagine 101.

Belongs to the alpha/beta interferon family. Interacts with CR2. Post-translationally, glycosylated.

Its subcellular location is the secreted. Functionally, produced by macrophages, IFN-alpha have antiviral activities. Interferon stimulates the production of two enzymes: a protein kinase and an oligoadenylate synthetase. The protein is Interferon alpha-1 (Ifna1) of Mus musculus (Mouse).